Consider the following 192-residue polypeptide: UPF0312 protein Pput_4854 (192 aa).

The first 23 residues, 1–23 (MLKKTFAALALGTALLSAGQAMA), serve as a signal peptide directing secretion.

This sequence belongs to the UPF0312 family. Type 1 subfamily.

The protein resides in the periplasm. The sequence is that of UPF0312 protein Pput_4854 from Pseudomonas putida (strain ATCC 700007 / DSM 6899 / JCM 31910 / BCRC 17059 / LMG 24140 / F1).